Here is a 214-residue protein sequence, read N- to C-terminus: Thymidylate kinase (214 aa).

Position 12-19 (12-19 (GLDGSGKS)) interacts with ATP.

It belongs to the thymidylate kinase family.

The enzyme catalyses dTMP + ATP = dTDP + ADP. Its function is as follows. Phosphorylation of dTMP to form dTDP in both de novo and salvage pathways of dTTP synthesis. This Bdellovibrio bacteriovorus (strain ATCC 15356 / DSM 50701 / NCIMB 9529 / HD100) protein is Thymidylate kinase.